Here is a 453-residue protein sequence, read N- to C-terminus: Glutamyl-tRNA reductase (453 aa).

Residues 50–53 (TCNR), Ser110, 115–117 (EPQ), and Gln121 contribute to the substrate site. Cys51 serves as the catalytic Nucleophile. 190 to 195 (GAGEMA) contacts NADP(+). Residues 423–436 (REKVPTDAHADRKP) are compositionally biased toward basic and acidic residues. Positions 423 to 453 (REKVPTDAHADRKPPNFAETSDDFDVTDASE) are disordered. Residues 442–453 (TSDDFDVTDASE) are compositionally biased toward acidic residues.

This sequence belongs to the glutamyl-tRNA reductase family. Homodimer.

The catalysed reaction is (S)-4-amino-5-oxopentanoate + tRNA(Glu) + NADP(+) = L-glutamyl-tRNA(Glu) + NADPH + H(+). Its pathway is porphyrin-containing compound metabolism; protoporphyrin-IX biosynthesis; 5-aminolevulinate from L-glutamyl-tRNA(Glu): step 1/2. Functionally, catalyzes the NADPH-dependent reduction of glutamyl-tRNA(Glu) to glutamate 1-semialdehyde (GSA). This is Glutamyl-tRNA reductase from Solidesulfovibrio magneticus (strain ATCC 700980 / DSM 13731 / RS-1) (Desulfovibrio magneticus).